A 191-amino-acid polypeptide reads, in one-letter code: Peptidyl-tRNA hydrolase (191 aa).

Y17 is a tRNA binding site. The Proton acceptor role is filled by H22. Residues Y68, N70, and N116 each contribute to the tRNA site.

This sequence belongs to the PTH family. Monomer.

Its subcellular location is the cytoplasm. It catalyses the reaction an N-acyl-L-alpha-aminoacyl-tRNA + H2O = an N-acyl-L-amino acid + a tRNA + H(+). In terms of biological role, hydrolyzes ribosome-free peptidyl-tRNAs (with 1 or more amino acids incorporated), which drop off the ribosome during protein synthesis, or as a result of ribosome stalling. Functionally, catalyzes the release of premature peptidyl moieties from peptidyl-tRNA molecules trapped in stalled 50S ribosomal subunits, and thus maintains levels of free tRNAs and 50S ribosomes. The chain is Peptidyl-tRNA hydrolase from Mycolicibacterium smegmatis (strain ATCC 700084 / mc(2)155) (Mycobacterium smegmatis).